The sequence spans 954 residues: Valine--tRNA ligase (954 aa).

The 'HIGH' region signature appears at 48-58; sequence PNVTGSLHMGH. The 'KMSKS' region motif lies at 560-564; that stretch reads KMSKS. Position 563 (Lys563) interacts with ATP. A coiled-coil region spans residues 883-953; the sequence is AGFINKEAEL…LKQQYLAIEA (71 aa).

The protein belongs to the class-I aminoacyl-tRNA synthetase family. ValS type 1 subfamily. In terms of assembly, monomer.

It is found in the cytoplasm. It carries out the reaction tRNA(Val) + L-valine + ATP = L-valyl-tRNA(Val) + AMP + diphosphate. Catalyzes the attachment of valine to tRNA(Val). As ValRS can inadvertently accommodate and process structurally similar amino acids such as threonine, to avoid such errors, it has a 'posttransfer' editing activity that hydrolyzes mischarged Thr-tRNA(Val) in a tRNA-dependent manner. The polypeptide is Valine--tRNA ligase (Pasteurella multocida (strain Pm70)).